A 95-amino-acid chain; its full sequence is UPF0358 protein BCG9842_B1188 (95 aa).

This sequence belongs to the UPF0358 family.

The sequence is that of UPF0358 protein BCG9842_B1188 from Bacillus cereus (strain G9842).